Consider the following 206-residue polypeptide: Ribosomal RNA small subunit methyltransferase G (206 aa).

Residues G73, L78, V124 to E125, and R139 each bind S-adenosyl-L-methionine.

Belongs to the methyltransferase superfamily. RNA methyltransferase RsmG family.

The protein localises to the cytoplasm. It carries out the reaction guanosine(527) in 16S rRNA + S-adenosyl-L-methionine = N(7)-methylguanosine(527) in 16S rRNA + S-adenosyl-L-homocysteine. In terms of biological role, specifically methylates the N7 position of guanine in position 527 of 16S rRNA. This chain is Ribosomal RNA small subunit methyltransferase G, found in Yersinia enterocolitica serotype O:8 / biotype 1B (strain NCTC 13174 / 8081).